A 396-amino-acid chain; its full sequence is Acetylornithine aminotransferase 2 (396 aa).

Pyridoxal 5'-phosphate-binding positions include 102 to 103 and phenylalanine 134; that span reads GA. Arginine 137 lines the N(2)-acetyl-L-ornithine pocket. 219 to 222 contacts pyridoxal 5'-phosphate; the sequence is DEVQ. Lysine 248 bears the N6-(pyridoxal phosphate)lysine mark. Threonine 276 contributes to the pyridoxal 5'-phosphate binding site.

The protein belongs to the class-III pyridoxal-phosphate-dependent aminotransferase family. ArgD subfamily. As to quaternary structure, homodimer. Requires pyridoxal 5'-phosphate as cofactor.

The protein localises to the cytoplasm. The enzyme catalyses N(2)-acetyl-L-ornithine + 2-oxoglutarate = N-acetyl-L-glutamate 5-semialdehyde + L-glutamate. Its pathway is amino-acid biosynthesis; L-arginine biosynthesis; N(2)-acetyl-L-ornithine from L-glutamate: step 4/4. The sequence is that of Acetylornithine aminotransferase 2 from Bordetella bronchiseptica (strain ATCC BAA-588 / NCTC 13252 / RB50) (Alcaligenes bronchisepticus).